Reading from the N-terminus, the 265-residue chain is Undecaprenyl-diphosphatase (265 aa).

8 helical membrane passes run 1–21, 39–59, 86–106, 112–132, 140–160, 186–206, 219–239, and 244–264; these read MDIL…FLPI, QGLA…ILYF, WCII…GNFI, SVSV…FADA, LAQM…LAMI, FSFL…GLKL, VGVL…LSFI, and MLPF…LVWF.

The protein belongs to the UppP family.

Its subcellular location is the cell inner membrane. It carries out the reaction di-trans,octa-cis-undecaprenyl diphosphate + H2O = di-trans,octa-cis-undecaprenyl phosphate + phosphate + H(+). Catalyzes the dephosphorylation of undecaprenyl diphosphate (UPP). Confers resistance to bacitracin. This chain is Undecaprenyl-diphosphatase, found in Saccharophagus degradans (strain 2-40 / ATCC 43961 / DSM 17024).